The primary structure comprises 313 residues: Ornithine carbamoyltransferase (313 aa).

Carbamoyl phosphate is bound by residues 57-60, Gln84, Arg108, and 135-138; these read STRT and HPCQ. L-ornithine contacts are provided by residues Asn166, Asp230, and 234 to 235; that span reads SM. Carbamoyl phosphate-binding positions include 270–271 and Arg298; that span reads CL.

This sequence belongs to the aspartate/ornithine carbamoyltransferase superfamily. OTCase family. As to quaternary structure, homohexamer.

The protein resides in the cytoplasm. The enzyme catalyses carbamoyl phosphate + L-ornithine = L-citrulline + phosphate + H(+). The protein operates within amino-acid biosynthesis; L-arginine biosynthesis; L-arginine from L-ornithine and carbamoyl phosphate: step 1/3. In terms of biological role, reversibly catalyzes the transfer of the carbamoyl group from carbamoyl phosphate (CP) to the N(epsilon) atom of ornithine (ORN) to produce L-citrulline. This Gloeobacter violaceus (strain ATCC 29082 / PCC 7421) protein is Ornithine carbamoyltransferase.